We begin with the raw amino-acid sequence, 1072 residues long: Serine/threonine-protein kinase 11-interacting protein (1072 aa).

LRR repeat units follow at residues 109-130 (SLRQ…RGIY), 132-152 (QLES…LSAC), 164-185 (ALLS…LRLL), 187-209 (ALRF…MDLC), 210-231 (ELYH…GPSG), 233-254 (ALGT…EQLK), 255-276 (NLRH…APLW), and 280-301 (ELRK…RAAT). The interval 333–366 (DSSGLGPVIQPLSWPVGSTTETSGGPELSDSLSS) is disordered. Residues Ser388, Ser390, and Ser393 each carry the phosphoserine modification. The span at 441–454 (MGSSPLSTTKTPAL) shows a compositional bias: polar residues. Disordered stretches follow at residues 441–522 (MGSS…EQKA) and 741–762 (RPDG…SLSP). 2 stretches are compositionally biased toward basic and acidic residues: residues 478 to 492 (KESP…RVEP) and 501 to 510 (EQDKEEGSRE). Ser757, Ser761, and Ser763 each carry phosphoserine. Positions 967 to 993 (HAESPLPVVSDETSEQPASLGPGPSLQ) are disordered.

Belongs to the STK11IP family. In terms of assembly, found in a ternary complex composed of STK11/LKB1, STK11IP and SMAD4. Interacts with SMAD4. Interacts with STK11/LKB1.

The protein localises to the cytoplasm. May regulate STK11/LKB1 function by controlling its subcellular localization. This chain is Serine/threonine-protein kinase 11-interacting protein (Stk11ip), found in Mus musculus (Mouse).